The chain runs to 230 residues: Enolase-phosphatase E1 (230 aa).

This sequence belongs to the HAD-like hydrolase superfamily. MasA/MtnC family. In terms of assembly, monomer. Mg(2+) is required as a cofactor.

It catalyses the reaction 5-methylsulfanyl-2,3-dioxopentyl phosphate + H2O = 1,2-dihydroxy-5-(methylsulfanyl)pent-1-en-3-one + phosphate. Its pathway is amino-acid biosynthesis; L-methionine biosynthesis via salvage pathway; L-methionine from S-methyl-5-thio-alpha-D-ribose 1-phosphate: step 3/6. It functions in the pathway amino-acid biosynthesis; L-methionine biosynthesis via salvage pathway; L-methionine from S-methyl-5-thio-alpha-D-ribose 1-phosphate: step 4/6. In terms of biological role, bifunctional enzyme that catalyzes the enolization of 2,3-diketo-5-methylthiopentyl-1-phosphate (DK-MTP-1-P) into the intermediate 2-hydroxy-3-keto-5-methylthiopentenyl-1-phosphate (HK-MTPenyl-1-P), which is then dephosphorylated to form the acireductone 1,2-dihydroxy-3-keto-5-methylthiopentene (DHK-MTPene). This chain is Enolase-phosphatase E1, found in Sulfurihydrogenibium sp. (strain YO3AOP1).